The following is a 258-amino-acid chain: Granzyme K (258 aa).

A signal peptide spans 1-23; the sequence is MSFSSSALVFLVAGIYMSSESFH. A propeptide spans 24 to 25 (activation peptide); the sequence is TE. Positions 26–253 constitute a Peptidase S1 domain; the sequence is IIGGREVQPH…YQTWIKSKLA (228 aa). A disulfide bridge links Cys51 with Cys67. Catalysis depends on charge relay system residues His66 and Asp110. 3 cysteine pairs are disulfide-bonded: Cys143–Cys214, Cys175–Cys193, and Cys204–Cys228. The Charge relay system role is filled by Ser208.

Belongs to the peptidase S1 family. Granzyme subfamily. As to expression, speen, lungs and liver non-parenchymal cells.

The protein resides in the cytoplasmic granule. In Rattus norvegicus (Rat), this protein is Granzyme K (Gzmk).